Here is a 242-residue protein sequence, read N- to C-terminus: Small ribosomal subunit protein uS2 (242 aa).

Belongs to the universal ribosomal protein uS2 family.

The chain is Small ribosomal subunit protein uS2 from Shewanella woodyi (strain ATCC 51908 / MS32).